Consider the following 38-residue polypeptide: IFINVKCSSPQQCLKPCKKAFGQHAGGKCINGKCKCYP.

Intrachain disulfides connect C7–C29, C13–C34, and C17–C36.

This sequence belongs to the short scorpion toxin superfamily. Potassium channel inhibitor family. Alpha-KTx 02 subfamily. As to expression, expressed by the venom gland.

The protein localises to the secreted. Its function is as follows. Blocks human voltage-gated potassium channels Kv1.2/KCNA2 (IC(50)=0.3 nM), Kv1.3/KCNA3 (IC(50)=8.3 nM) and Shaker IR (with inactivation domain removed) (IC(50)=12 nM) and blocks intermediate conductance calcium-activated potassium channel KCa3.1/KCNN4 (IC(50)=6.4 nM). The chain is Potassium channel toxin alpha-KTx 2.15 from Centruroides tecomanus (Scorpion).